Consider the following 311-residue polypeptide: Methionyl-tRNA formyltransferase (311 aa).

110–113 provides a ligand contact to (6S)-5,6,7,8-tetrahydrofolate; the sequence is SLLP.

This sequence belongs to the Fmt family.

It catalyses the reaction L-methionyl-tRNA(fMet) + (6R)-10-formyltetrahydrofolate = N-formyl-L-methionyl-tRNA(fMet) + (6S)-5,6,7,8-tetrahydrofolate + H(+). Attaches a formyl group to the free amino group of methionyl-tRNA(fMet). The formyl group appears to play a dual role in the initiator identity of N-formylmethionyl-tRNA by promoting its recognition by IF2 and preventing the misappropriation of this tRNA by the elongation apparatus. This Sulfurihydrogenibium sp. (strain YO3AOP1) protein is Methionyl-tRNA formyltransferase.